A 56-amino-acid polypeptide reads, in one-letter code: MATKGGRDKIKLESTAGTGHFYTTTKNKKTMPEKMSIIKFDPKARKHVEYKEMKLK.

Residues 1–12 are compositionally biased toward basic and acidic residues; it reads MATKGGRDKIKL. A disordered region spans residues 1 to 24; it reads MATKGGRDKIKLESTAGTGHFYTT. Positions 15-24 are enriched in polar residues; the sequence is TAGTGHFYTT.

The protein belongs to the bacterial ribosomal protein bL33 family.

This is Large ribosomal subunit protein bL33 from Paracidovorax citrulli (strain AAC00-1) (Acidovorax citrulli).